The sequence spans 836 residues: Protein O-mannosyl-transferase TMTC2 (836 aa).

A helical membrane pass occupies residues 1–21 (MIAELVSSALGLALYLNTLSA). Over 22–77 (DFCYDDSRAIKTNQDLLPETPWTHIFYNDFWGTLLTHSGSHKSYRPLCTLSFRLNH) the chain is Extracellular. The helical transmembrane segment at 78–98 (AIGGLNPWSYHLVNVLLHAAV) threads the bilayer. Residues 99–107 (TGLFTRFSK) lie on the Cytoplasmic side of the membrane. The helical transmembrane segment at 108-128 (ALLGDGYWTFMAGLMFASHPI) threads the bilayer. Residues 129-132 (HTEA) are Extracellular-facing. A helical membrane pass occupies residues 133-153 (VAGIVGRADVGASLFFLLSLL). Over 154 to 168 (CYIKHCSTRGYSART) the chain is Cytoplasmic. 2 consecutive transmembrane segments (helical) span residues 169-184 (WGWFLGTGLCAGCSML) and 185-204 (WKEQGVTVLAVSAVYDVFVF). Residues 205 to 220 (HRLKMKQILPTIYKRK) lie on the Cytoplasmic side of the membrane. The helical transmembrane segment at 221–241 (NLSLFLSISLLTFWGTCLLGA) threads the bilayer. Over 242–312 (RLYWMGNKPP…KTVCDWRNLH (71 aa)) the chain is Extracellular. Residues 313-333 (TVAFYSGLLLLAYCGLKNPSL) form a helical membrane-spanning segment. Residues 334 to 392 (EGECNGKALTNGKQNANGHSCHSDVEYRNSEMKPSFASKVENGIKNCVPQRTQLPSTEN) lie on the Cytoplasmic side of the membrane. Residues 393 to 415 (IVILSLSLLIIPFIPATNLFFYV) form a helical membrane-spanning segment. Topologically, residues 416-422 (GFVIAER) are extracellular. The helical transmembrane segment at 423–443 (VLYIPSMGFCLLITVGARALY) threads the bilayer. Residues 444 to 449 (VKVQKR) lie on the Cytoplasmic side of the membrane. The helical transmembrane segment at 450–470 (FLKSLVFYATATLIVFYGVKT) threads the bilayer. Over 471–836 (AIRNGDWQNE…EKQGLKTSKT (366 aa)) the chain is Extracellular. TPR repeat units follow at residues 493–526 (AKAWGNLGNVLKSQSKISEAESAYRNALFYRSNM), 527–560 (ADMLYNLGLLLQENSRFAEALHYYKLAIGSRPTL), 561–594 (ASAYLNTGIILMNQGKTEEARRTFLKCSEIPDEN), 606–639 (TSCLYNLGKLYHEQGRYEEALSVYREAIQKMPRH), 643–676 (QSLYNMMGEAYMRLSKLPEAEHWYMESLRSKTDH), 677–710 (IPAHLTYGKLLALTGRKSEAEKFFLKAIELDPTK), 711–744 (GNCYMHYGQFLLEESRLTEAAEMAKKAAELDNTE), 745–778 (FDVVFNAAHMLRQASLNEAAEKYYDLAARLRPNY), and 779–812 (PAALMNLGAILHLNGRLQKAEANYLRALQLKPDD).

This sequence belongs to the TMTC family.

It localises to the membrane. It is found in the endoplasmic reticulum. It carries out the reaction a di-trans,poly-cis-dolichyl beta-D-mannosyl phosphate + L-seryl-[protein] = 3-O-(alpha-D-mannosyl)-L-seryl-[protein] + a di-trans,poly-cis-dolichyl phosphate + H(+). It catalyses the reaction a di-trans,poly-cis-dolichyl beta-D-mannosyl phosphate + L-threonyl-[protein] = 3-O-(alpha-D-mannosyl)-L-threonyl-[protein] + a di-trans,poly-cis-dolichyl phosphate + H(+). It functions in the pathway protein modification; protein glycosylation. Functionally, transfers mannosyl residues to the hydroxyl group of serine or threonine residues. The 4 members of the TMTC family are O-mannosyl-transferases dedicated primarily to the cadherin superfamily, each member seems to have a distinct role in decorating the cadherin domains with O-linked mannose glycans at specific regions. Also acts as O-mannosyl-transferase on other proteins such as PDIA3. In Mus musculus (Mouse), this protein is Protein O-mannosyl-transferase TMTC2.